The sequence spans 272 residues: DNA repair protein RecO (272 aa).

The protein belongs to the RecO family.

Functionally, involved in DNA repair and RecF pathway recombination. The polypeptide is DNA repair protein RecO (Latilactobacillus sakei subsp. sakei (strain 23K) (Lactobacillus sakei subsp. sakei)).